Here is a 290-residue protein sequence, read N- to C-terminus: Lipoyl synthase (290 aa).

[4Fe-4S] cluster contacts are provided by Cys-36, Cys-41, Cys-47, Cys-62, Cys-66, Cys-69, and Ser-275. The Radical SAM core domain occupies 48-264 (FSKKTATFMI…KEEALKIGFS (217 aa)).

Belongs to the radical SAM superfamily. Lipoyl synthase family. It depends on [4Fe-4S] cluster as a cofactor.

Its subcellular location is the cytoplasm. It carries out the reaction [[Fe-S] cluster scaffold protein carrying a second [4Fe-4S](2+) cluster] + N(6)-octanoyl-L-lysyl-[protein] + 2 oxidized [2Fe-2S]-[ferredoxin] + 2 S-adenosyl-L-methionine + 4 H(+) = [[Fe-S] cluster scaffold protein] + N(6)-[(R)-dihydrolipoyl]-L-lysyl-[protein] + 4 Fe(3+) + 2 hydrogen sulfide + 2 5'-deoxyadenosine + 2 L-methionine + 2 reduced [2Fe-2S]-[ferredoxin]. Its pathway is protein modification; protein lipoylation via endogenous pathway; protein N(6)-(lipoyl)lysine from octanoyl-[acyl-carrier-protein]: step 2/2. Its function is as follows. Catalyzes the radical-mediated insertion of two sulfur atoms into the C-6 and C-8 positions of the octanoyl moiety bound to the lipoyl domains of lipoate-dependent enzymes, thereby converting the octanoylated domains into lipoylated derivatives. The polypeptide is Lipoyl synthase (Alkaliphilus metalliredigens (strain QYMF)).